The following is a 376-amino-acid chain: Serine/threonine-protein kinase-transforming protein mos (376 aa).

A Protein kinase domain is found at 94–376 (VCLMHRLGSG…KALADSIEPM (283 aa)). ATP-binding positions include 100–108 (LGSGGFGSV) and K121. D229 acts as the Proton acceptor in catalysis.

It belongs to the protein kinase superfamily. Ser/Thr protein kinase family.

It carries out the reaction L-seryl-[protein] + ATP = O-phospho-L-seryl-[protein] + ADP + H(+). The enzyme catalyses L-threonyl-[protein] + ATP = O-phospho-L-threonyl-[protein] + ADP + H(+). This is Serine/threonine-protein kinase-transforming protein mos (V-MOS) from Moloney murine sarcoma virus (strain m1) (MoMSV).